The following is a 253-amino-acid chain: MAANFWNSSHYKQLLDPEEVDVVHDLDKERGISIDDFKLIKFHMSNHIMKLAQHIKVRQRVVATAITYMRRVYIRKSMVEFEPRLVALTCLYLASKAEESIVQARNLVFYIKRLYPDEYNKYELKDILGMEMKVLEALDYYLVVFHPYRSLSEFLQDAALNDVNMNQITWGIVNDTYKMDLILVHPPYRIALACIYIASVHREKDITAWFEDLHEDMNLVKNIAMEILDFYENYRTITEEKVNSAFSKLALKL.

It belongs to the cyclin family. Cyclin C subfamily.

The polypeptide is Cyclin-C1-1 (CYCC1-1) (Arabidopsis thaliana (Mouse-ear cress)).